The sequence spans 345 residues: Anthranilate phosphoribosyltransferase (345 aa).

Residues G84, 87–88 (GD), T92, 94–97 (NIST), 112–120 (KHGNRSVSS), and S124 contribute to the 5-phospho-alpha-D-ribose 1-diphosphate site. An anthranilate-binding site is contributed by G84. Residue S96 coordinates Mg(2+). N115 lines the anthranilate pocket. Residue R170 coordinates anthranilate. Mg(2+)-binding residues include D229 and E230.

It belongs to the anthranilate phosphoribosyltransferase family. In terms of assembly, homodimer. Mg(2+) is required as a cofactor.

The enzyme catalyses N-(5-phospho-beta-D-ribosyl)anthranilate + diphosphate = 5-phospho-alpha-D-ribose 1-diphosphate + anthranilate. Its pathway is amino-acid biosynthesis; L-tryptophan biosynthesis; L-tryptophan from chorismate: step 2/5. Its function is as follows. Catalyzes the transfer of the phosphoribosyl group of 5-phosphorylribose-1-pyrophosphate (PRPP) to anthranilate to yield N-(5'-phosphoribosyl)-anthranilate (PRA). In Xanthomonas campestris pv. campestris (strain 8004), this protein is Anthranilate phosphoribosyltransferase.